Consider the following 1030-residue polypeptide: Isoleucine--tRNA ligase 2 (1030 aa).

The 'HIGH' region motif lies at 48–58 (PFATGLPHYGH). Positions 589 to 593 (KMSKR) match the 'KMSKS' region motif. Position 592 (Lys592) interacts with ATP.

This sequence belongs to the class-I aminoacyl-tRNA synthetase family. IleS type 2 subfamily. As to quaternary structure, monomer. Zn(2+) serves as cofactor.

The protein resides in the cytoplasm. The enzyme catalyses tRNA(Ile) + L-isoleucine + ATP = L-isoleucyl-tRNA(Ile) + AMP + diphosphate. In terms of biological role, catalyzes the attachment of isoleucine to tRNA(Ile). As IleRS can inadvertently accommodate and process structurally similar amino acids such as valine, to avoid such errors it has two additional distinct tRNA(Ile)-dependent editing activities. One activity is designated as 'pretransfer' editing and involves the hydrolysis of activated Val-AMP. The other activity is designated 'posttransfer' editing and involves deacylation of mischarged Val-tRNA(Ile). Confers high-level resistance to the antibiotic mupirocin (pseudomonic acid A), an Ile-analog produced by P.fluorescens NCIMB 10586 itself that competitively inhibits activation by Ile-tRNA synthetase, thus inhibiting protein biosynthesis. The protein is Isoleucine--tRNA ligase 2 (ileS2) of Pseudomonas fluorescens.